Reading from the N-terminus, the 474-residue chain is MKVSISHKNNFKGVSYQAQALLMSKSVFAKSPYAKLCKSFGFEGEGKFFLQEQALLLVCVEELGLDSIREAGASIARHFRTLPYKNVNVALNGKLDDSKAYALLLGALLGVYECVSYKTKTPPLHLKEIILLDEKNEVASESVLKKVHIVAQSVNEVREIINTIPQVATPKYLAKYAKELSKEVGNLECKILDEEALQKEKMGAFLAVNRASCNPPRLIHLSYKPKGAKKRIVLVGKGLTYDCGGLSLKPADFMVTMKADKSGGCAVMGIIKAIAQLGANIEVHSIIGAAENMIGGNAYKPDDVLYSREGKSIEVRNTDAEGRLVLVDCLSYAQDLKPDILIDFATLTGACVVALGEFTSGIMGHNDRLKAQFEKCALESGELMATLPFNRHLKKLIESKIADVCNVGSSRYGGAISAGLFLSEFIREEFKQKWLHIDIAGPAYVEKEWDINPSGASGAGVRAGIEFILAQGKA.

Residues lysine 237 and aspartate 242 each coordinate Mn(2+). Lysine 249 is an active-site residue. Residues aspartate 260, aspartate 319, and glutamate 321 each contribute to the Mn(2+) site. Arginine 323 is an active-site residue.

This sequence belongs to the peptidase M17 family. The cofactor is Mn(2+).

It localises to the cytoplasm. It catalyses the reaction Release of an N-terminal amino acid, Xaa-|-Yaa-, in which Xaa is preferably Leu, but may be other amino acids including Pro although not Arg or Lys, and Yaa may be Pro. Amino acid amides and methyl esters are also readily hydrolyzed, but rates on arylamides are exceedingly low.. The catalysed reaction is Release of an N-terminal amino acid, preferentially leucine, but not glutamic or aspartic acids.. In terms of biological role, presumably involved in the processing and regular turnover of intracellular proteins. Catalyzes the removal of unsubstituted N-terminal amino acids from various peptides. The polypeptide is Probable cytosol aminopeptidase (Helicobacter hepaticus (strain ATCC 51449 / 3B1)).